Here is an 88-residue protein sequence, read N- to C-terminus: Small ribosomal subunit protein uS15 (88 aa).

Belongs to the universal ribosomal protein uS15 family. Part of the 30S ribosomal subunit. Forms a bridge to the 50S subunit in the 70S ribosome, contacting the 23S rRNA.

In terms of biological role, one of the primary rRNA binding proteins, it binds directly to 16S rRNA where it helps nucleate assembly of the platform of the 30S subunit by binding and bridging several RNA helices of the 16S rRNA. Functionally, forms an intersubunit bridge (bridge B4) with the 23S rRNA of the 50S subunit in the ribosome. The chain is Small ribosomal subunit protein uS15 from Flavobacterium psychrophilum (strain ATCC 49511 / DSM 21280 / CIP 103535 / JIP02/86).